A 381-amino-acid chain; its full sequence is Cytochrome b (381 aa).

4 consecutive transmembrane segments (helical) span residues 34–54 (FGSLLGLCLIIQILTGLFLAM), 78–99 (WLIRNIHANGASLFFICIYLHI), 114–134 (WNIGVILLFLLMATAFVGYVL), and 179–199 (FFAFHFLLPFLILALTIIHLL). Heme b-binding residues include His84 and His98. Heme b contacts are provided by His183 and His197. His202 lines the a ubiquinone pocket. Helical transmembrane passes span 227–247 (YKDILGFFAMIFFLAVLTLFI), 289–309 (LGGVLALLFSILILMLVPLLQ), 321–341 (MTQILFWFLVANSIILTWIGG), and 348–368 (FIMVGQIASISYFSMFLIIIP).

Belongs to the cytochrome b family. In terms of assembly, the cytochrome bc1 complex contains 3 respiratory subunits (MT-CYB, CYC1 and UQCRFS1), 2 core proteins (UQCRC1 and UQCRC2) and probably 6 low-molecular weight proteins. It depends on heme b as a cofactor.

It is found in the mitochondrion inner membrane. Component of the ubiquinol-cytochrome c reductase complex (complex III or cytochrome b-c1 complex) that is part of the mitochondrial respiratory chain. The b-c1 complex mediates electron transfer from ubiquinol to cytochrome c. Contributes to the generation of a proton gradient across the mitochondrial membrane that is then used for ATP synthesis. This is Cytochrome b (mt-cyb) from Galeocerdo cuvier (Tiger shark).